Here is a 182-residue protein sequence, read N- to C-terminus: Ribulose bisphosphate carboxylase small subunit, chloroplastic 1 (182 aa).

A chloroplast-targeting transit peptide spans methionine 1–glutamate 42.

This sequence belongs to the RuBisCO small chain family. As to quaternary structure, heterohexadecamer of 8 large and 8 small subunits.

The protein resides in the plastid. It is found in the chloroplast. Functionally, ruBisCO catalyzes two reactions: the carboxylation of D-ribulose 1,5-bisphosphate, the primary event in carbon dioxide fixation, as well as the oxidative fragmentation of the pentose substrate. Both reactions occur simultaneously and in competition at the same active site. Although the small subunit is not catalytic it is essential for maximal activity. The protein is Ribulose bisphosphate carboxylase small subunit, chloroplastic 1 of Acetabularia acetabulum (Mermaid's wine glass).